The sequence spans 160 residues: Endoplasmic reticulum transmembrane protein 2 (160 aa).

The Lumenal portion of the chain corresponds to Met1–Gly2. Residues Val3 to Val23 form a helical membrane-spanning segment. Topologically, residues Leu24–Lys45 are cytoplasmic. The chain crosses the membrane as a helical span at residues Lys46–Trp66. At Lys67–Asn103 the chain is on the lumenal side. The helical transmembrane segment at Val104 to Leu124 threads the bilayer. At Arg125–Phe160 the chain is on the cytoplasmic side. Positions Lys157–Phe160 match the Di-lysine motif motif.

The protein belongs to the BCAP29/BCAP31 family.

Its subcellular location is the endoplasmic reticulum membrane. Functionally, may play a role in anterograde transport of membrane proteins from the endoplasmic reticulum to the Golgi. In Saccharomyces cerevisiae (strain ATCC 204508 / S288c) (Baker's yeast), this protein is Endoplasmic reticulum transmembrane protein 2 (YET2).